A 284-amino-acid chain; its full sequence is Nucleotide-binding protein CPS_4546 (284 aa).

8 to 15 (GRSGSGKS) serves as a coordination point for ATP. GTP is bound at residue 56–59 (DVRN).

This sequence belongs to the RapZ-like family.

Functionally, displays ATPase and GTPase activities. The protein is Nucleotide-binding protein CPS_4546 of Colwellia psychrerythraea (strain 34H / ATCC BAA-681) (Vibrio psychroerythus).